The chain runs to 450 residues: UDP-N-acetylmuramoylalanine--D-glutamate ligase (450 aa).

Position 119–125 (glycine 119–threonine 125) interacts with ATP.

It belongs to the MurCDEF family.

The protein localises to the cytoplasm. It catalyses the reaction UDP-N-acetyl-alpha-D-muramoyl-L-alanine + D-glutamate + ATP = UDP-N-acetyl-alpha-D-muramoyl-L-alanyl-D-glutamate + ADP + phosphate + H(+). It functions in the pathway cell wall biogenesis; peptidoglycan biosynthesis. In terms of biological role, cell wall formation. Catalyzes the addition of glutamate to the nucleotide precursor UDP-N-acetylmuramoyl-L-alanine (UMA). The sequence is that of UDP-N-acetylmuramoylalanine--D-glutamate ligase from Streptococcus pneumoniae (strain P1031).